Here is a 135-residue protein sequence, read N- to C-terminus: NADH-quinone oxidoreductase subunit A (135 aa).

The next 3 helical transmembrane spans lie at 9 to 29, 67 to 87, and 97 to 117; these read YFPILLQAVIAMGLAAGLLTV, VGMLFILFDIEAIFLYPWVVV, and LFGFYEMLTFVILILSGFFYI.

It belongs to the complex I subunit 3 family. NDH-1 is composed of 14 different subunits. Subunits NuoA, H, J, K, L, M, N constitute the membrane sector of the complex.

The protein localises to the cell inner membrane. It catalyses the reaction a quinone + NADH + 5 H(+)(in) = a quinol + NAD(+) + 4 H(+)(out). In terms of biological role, NDH-1 shuttles electrons from NADH, via FMN and iron-sulfur (Fe-S) centers, to quinones in the respiratory chain. The immediate electron acceptor for the enzyme in this species is believed to be ubiquinone. Couples the redox reaction to proton translocation (for every two electrons transferred, four hydrogen ions are translocated across the cytoplasmic membrane), and thus conserves the redox energy in a proton gradient. This chain is NADH-quinone oxidoreductase subunit A, found in Solibacter usitatus (strain Ellin6076).